A 248-amino-acid chain; its full sequence is Anamorsin homolog (248 aa).

Residues 4-129 (FKGLQKSLYI…ETGSSARLSF (126 aa)) form an N-terminal SAM-like domain region. Positions 130-161 (AKKNASAVNVWKISGDDEELIDEEELLDEEDK) are linker. Residues C172, C181, C184, and C186 each coordinate [2Fe-2S] cluster. The fe-S binding site A stretch occupies residues 172 to 186 (CSTTGKRKACKNCSC). [4Fe-4S] cluster contacts are provided by C209, C212, C220, and C223. 2 consecutive short sequence motifs (cx2C motif) follow at residues 209–212 (CGNC) and 220–223 (CSTC). The interval 209 to 223 (CGNCYLGDAFRCSTC) is fe-S binding site B.

It belongs to the anamorsin family. As to quaternary structure, monomer. [2Fe-2S] cluster is required as a cofactor. It depends on [4Fe-4S] cluster as a cofactor.

It localises to the cytoplasm. It is found in the mitochondrion intermembrane space. Functionally, component of the cytosolic iron-sulfur (Fe-S) protein assembly (CIA) machinery. Required for the maturation of extramitochondrial Fe-S proteins. Part of an electron transfer chain functioning in an early step of cytosolic Fe-S biogenesis, facilitating the de novo assembly of a [4Fe-4S] cluster on the cytosolic Fe-S scaffold complex. Electrons are transferred from NADPH via a FAD- and FMN-containing diflavin oxidoreductase. Together with the diflavin oxidoreductase, also required for the assembly of the diferric tyrosyl radical cofactor of ribonucleotide reductase (RNR), probably by providing electrons for reduction during radical cofactor maturation in the catalytic small subunit. In Drosophila yakuba (Fruit fly), this protein is Anamorsin homolog.